A 471-amino-acid chain; its full sequence is NADH-quinone oxidoreductase subunit N 1 (471 aa).

14 helical membrane passes run 11–31, 39–59, 81–101, 105–125, 127–147, 162–182, 200–220, 234–254, 270–290, 296–316, 324–344, 365–385, 398–418, and 444–464; these read ALVP…AGAW, TIHV…ALAA, AIVL…VAGH, TEFV…AGAG, LIML…LAGW, LAGA…FGVA, AAAA…AGAV, PPPV…VAFY, LITA…AFAQ, MLGY…AVAG, ALLL…AVVA, ALAL…AVFV, GLAW…FYYL, and AVAL…GIVL.

Belongs to the complex I subunit 2 family. NDH-1 is composed of 14 different subunits. Subunits NuoA, H, J, K, L, M, N constitute the membrane sector of the complex.

Its subcellular location is the cell membrane. It catalyses the reaction a quinone + NADH + 5 H(+)(in) = a quinol + NAD(+) + 4 H(+)(out). Functionally, NDH-1 shuttles electrons from NADH, via FMN and iron-sulfur (Fe-S) centers, to quinones in the respiratory chain. The immediate electron acceptor for the enzyme in this species is believed to be a menaquinone. Couples the redox reaction to proton translocation (for every two electrons transferred, four hydrogen ions are translocated across the cytoplasmic membrane), and thus conserves the redox energy in a proton gradient. The sequence is that of NADH-quinone oxidoreductase subunit N 1 from Streptomyces griseus subsp. griseus (strain JCM 4626 / CBS 651.72 / NBRC 13350 / KCC S-0626 / ISP 5235).